Consider the following 428-residue polypeptide: uncharacterized protein (428 aa).

Residues 72-91 (SQGSPVAPSPNHRSTMYSSS) are disordered. Ser-127 bears the Phosphoserine mark.

This is an uncharacterized protein from Saccharomyces cerevisiae (strain ATCC 204508 / S288c) (Baker's yeast).